The primary structure comprises 231 residues: ATP phosphoribosyltransferase (231 aa).

The protein belongs to the ATP phosphoribosyltransferase family. Short subfamily. In terms of assembly, heteromultimer composed of HisG and HisZ subunits.

Its subcellular location is the cytoplasm. It carries out the reaction 1-(5-phospho-beta-D-ribosyl)-ATP + diphosphate = 5-phospho-alpha-D-ribose 1-diphosphate + ATP. The protein operates within amino-acid biosynthesis; L-histidine biosynthesis; L-histidine from 5-phospho-alpha-D-ribose 1-diphosphate: step 1/9. Functionally, catalyzes the condensation of ATP and 5-phosphoribose 1-diphosphate to form N'-(5'-phosphoribosyl)-ATP (PR-ATP). Has a crucial role in the pathway because the rate of histidine biosynthesis seems to be controlled primarily by regulation of HisG enzymatic activity. This Brucella suis (strain ATCC 23445 / NCTC 10510) protein is ATP phosphoribosyltransferase.